Consider the following 728-residue polypeptide: Beta-galactosidase 12 (728 aa).

The first 27 residues, 1-27 (MGLNFREKAWILLGILCCSSLICSVKA), serve as a signal peptide directing secretion. Glutamate 185 acts as the Proton donor in catalysis. Glutamate 254 (nucleophile) is an active-site residue. N-linked (GlcNAc...) asparagine glycosylation is found at asparagine 255, asparagine 380, and asparagine 450.

This sequence belongs to the glycosyl hydrolase 35 family. Ubiquitous, with higher expression levels in roots and siliques.

The protein localises to the secreted. It localises to the extracellular space. It is found in the apoplast. It carries out the reaction Hydrolysis of terminal non-reducing beta-D-galactose residues in beta-D-galactosides.. The protein is Beta-galactosidase 12 (BGAL12) of Arabidopsis thaliana (Mouse-ear cress).